We begin with the raw amino-acid sequence, 156 residues long: S-ribosylhomocysteine lyase (156 aa).

Fe cation-binding residues include His54, His58, and Cys126.

The protein belongs to the LuxS family. In terms of assembly, homodimer. The cofactor is Fe cation.

The catalysed reaction is S-(5-deoxy-D-ribos-5-yl)-L-homocysteine = (S)-4,5-dihydroxypentane-2,3-dione + L-homocysteine. Functionally, involved in the synthesis of autoinducer 2 (AI-2) which is secreted by bacteria and is used to communicate both the cell density and the metabolic potential of the environment. The regulation of gene expression in response to changes in cell density is called quorum sensing. Catalyzes the transformation of S-ribosylhomocysteine (RHC) to homocysteine (HC) and 4,5-dihydroxy-2,3-pentadione (DPD). This Shouchella clausii (strain KSM-K16) (Alkalihalobacillus clausii) protein is S-ribosylhomocysteine lyase.